We begin with the raw amino-acid sequence, 548 residues long: Eukaryotic translation initiation factor 3 subunit D (548 aa).

At Lys53 the chain carries N6-acetyllysine. Position 161 is a phosphoserine (Ser161). The RNA gate stretch occupies residues 285–299; the sequence is DFDLLTVSETANEPP. The segment at 523 to 548 is disordered; the sequence is PDGTFSSDEDEEEEEEEEEEEEEEET. Phosphoserine is present on residues Ser528 and Ser529. Residues 529–548 are compositionally biased toward acidic residues; the sequence is SDEDEEEEEEEEEEEEEEET.

This sequence belongs to the eIF-3 subunit D family. As to quaternary structure, component of the eukaryotic translation initiation factor 3 (eIF-3) complex, which is composed of 13 subunits: EIF3A, EIF3B, EIF3C, EIF3D, EIF3E, EIF3F, EIF3G, EIF3H, EIF3I, EIF3J, EIF3K, EIF3L and EIF3M. The eIF-3 complex appears to include 3 stable modules: module A is composed of EIF3A, EIF3B, EIF3G and EIF3I; module B is composed of EIF3F, EIF3H, and EIF3M; and module C is composed of EIF3C, EIF3D, EIF3E, EIF3K and EIF3L. EIF3C of module C binds EIF3B of module A and EIF3H of module B, thereby linking the three modules. EIF3J is a labile subunit that binds to the eIF-3 complex via EIF3B. The eIF-3 complex interacts with RPS6KB1 under conditions of nutrient depletion. Mitogenic stimulation leads to binding and activation of a complex composed of MTOR and RPTOR, leading to phosphorylation and release of RPS6KB1 and binding of EIF4B to eIF-3. In terms of assembly, (Microbial infection) Interacts with Norwalk virus VPg protein.

The protein resides in the cytoplasm. Its function is as follows. mRNA cap-binding component of the eukaryotic translation initiation factor 3 (eIF-3) complex, a complex required for several steps in the initiation of protein synthesis of a specialized repertoire of mRNAs. The eIF-3 complex associates with the 40S ribosome and facilitates the recruitment of eIF-1, eIF-1A, eIF-2:GTP:methionyl-tRNAi and eIF-5 to form the 43S pre-initiation complex (43S PIC). The eIF-3 complex stimulates mRNA recruitment to the 43S PIC and scanning of the mRNA for AUG recognition. The eIF-3 complex is also required for disassembly and recycling of post-termination ribosomal complexes and subsequently prevents premature joining of the 40S and 60S ribosomal subunits prior to initiation. The eIF-3 complex specifically targets and initiates translation of a subset of mRNAs involved in cell proliferation, including cell cycling, differentiation and apoptosis, and uses different modes of RNA stem-loop binding to exert either translational activation or repression. In the eIF-3 complex, EIF3D specifically recognizes and binds the 7-methylguanosine cap of a subset of mRNAs. (Microbial infection) In case of FCV infection, plays a role in the ribosomal termination-reinitiation event leading to the translation of VP2. The chain is Eukaryotic translation initiation factor 3 subunit D from Homo sapiens (Human).